We begin with the raw amino-acid sequence, 465 residues long: MAAVDSVAQALAYLQVHSPQDGTSMYDHLVKLVSKVLEDQPKNAVDLLETSLLVKKSTFDPKESSPLVPIPVAPDATQTQAAVSIFGDPELPINPATGEPVPADPPNEFEAENMLGAAAVLDCLGVGLGRELGVNIALAAKRIGEDPKLAVRSVRFFGKFLGLYSDYFVFEVAFKKEAAKEAAPAAPAPERVEGEAASSSAPEVPVEEPGKGANKFTYLVCSSLGGPLTRLPDVTPAQVKASRRIKKLLTGRLTSHVSTYPAFPGNEANYLRALIARISAATVVAPSDLFSLNDETGELERAEDWEPPAGREMAAPTAWVHVRPHLKSQGRCEVHKRELPEDADEDEFYNEDELEEGPDLLAALEEDAQLPGEQAAWTPIYSSASEAVKTQAGGLRSLVWPGAVCGGRGSEWTCVYVGWGVKNAPFVPLPPPPVAQEFAWGEVETQELELKPAPPPPEEEAEADE.

Disordered stretches follow at residues 184–209 (PAAPAPERVEGEAASSSAPEVPVEEP) and 445–465 (TQELELKPAPPPPEEEAEADE).

Belongs to the flagellar radial spoke RSP4/6 family. The radial spoke head is made of five different polypeptides (RSP1, RSP4, RSP6, RSP9, and RSP10).

Its subcellular location is the cytoplasm. It is found in the cytoskeleton. It localises to the flagellum axoneme. Functionally, flagellar radial spokes contribute to the regulation of dynein arm activity and thus the pattern of flagellar bending. They consist of a thin stalk, which is attached to the a subfiber of the outer doublet microtubule, and a bulbous head, which is attached to the stalk and appears to interact with the projections from the central pair of microtubules. This Chlamydomonas reinhardtii (Chlamydomonas smithii) protein is Flagellar radial spoke protein 4 (RSP4).